A 1137-amino-acid chain; its full sequence is UDP-N-acetylglucosamine transferase subunit ALG13 (1137 aa).

A glycosyltransferase activity region spans residues 1 to 125 (MKCVFVTVGT…LHKEGHLFYC (125 aa)). The deubiquitinase activity stretch occupies residues 126-400 (TCRVLTCPGQ…GSKKNRNNAV (275 aa)). One can recognise an OTU domain in the interval 231-352 (LFRKLTAKDA…SGHYDSVYSK (122 aa)). D239 (for deubiquitinase activity) is an active-site residue. C242 functions as the Nucleophile; for deubiquitinase activity in the catalytic mechanism. The active-site For deubiquitinase activity is the H345. The 61-residue stretch at 492–552 (QYYLGDKCQV…KPVTQVMSVP (61 aa)) folds into the Tudor domain. Disordered regions lie at residues 641–660 (HFHPQHPSPRQGRGYGMPRN) and 911–974 (IPHA…SGSD). 2 stretches are compositionally biased toward pro residues: residues 918–946 (LPPPPPPPPPPPPPPPPPPPPPPPPPPPA) and 956–967 (QPPPPLPPPPYS).

Belongs to the glycosyltransferase 28 family. Forms with ALG14 the active heterodimeric UDP-N-acetylglucosamine transferase complex. As to quaternary structure, not able to interact with ALG14 to form an active UDP-N-acetylglucosamine transferase complex.

The protein localises to the endoplasmic reticulum membrane. The catalysed reaction is an N-acetyl-alpha-D-glucosaminyl-diphospho-di-trans,poly-cis-dolichol + UDP-N-acetyl-alpha-D-glucosamine = an N,N'-diacetylchitobiosyl-diphospho-di-trans,poly-cis-dolichol + UDP + H(+). It participates in protein modification; protein glycosylation. In terms of biological role, catalytic subunit of the UDP-N-acetylglucosamine transferase complex that operates in the biosynthetic pathway of dolichol-linked oligosaccharides, the glycan precursors employed in protein asparagine (N)-glycosylation. The assembly of dolichol-linked oligosaccharides begins on the cytosolic side of the endoplasmic reticulum membrane and finishes in its lumen. The sequential addition of sugars to dolichol pyrophosphate produces dolichol-linked oligosaccharides containing fourteen sugars, including two GlcNAcs, nine mannoses and three glucoses. Once assembled, the oligosaccharide is transferred from the lipid to nascent proteins by oligosaccharyltransferases. On the cytoplasmic face of the endoplasmic reticulum, the dimeric ALG13/ALG14 complex catalyzes the second step of dolichol pyrophosphate biosynthesis, transferring a beta1,4-linked N-acetylglucosamine (GlcNAc) from UDP-GlcNAc to GlcNAc-pyrophosphatedolichol (Gn-PDol) to produce N,N'-diacetylchitobiosyl diphosphodolichol. N,N'-diacetylchitobiosyl diphosphodolichol is a substrate for ALG1, the following enzyme in the biosynthetic pathway. Functionally, no glycosyltransferase or deubiquitinase activity is detected for this potential multifunctional enzyme. The polypeptide is UDP-N-acetylglucosamine transferase subunit ALG13 (Homo sapiens (Human)).